The following is a 459-amino-acid chain: Transcription factor 7-like 2 (459 aa).

Residues 1–11 show a composition bias toward gly residues; sequence MPQLNGGGGDD. A CTNNB1-binding region spans residues 1-53; that stretch reads MPQLNGGGGDDLGANDELISFKDEGEQEEKNSENSSAERDLADVKSSLVNESE. A disordered region spans residues 1–96; that stretch reads MPQLNGGGGD…AKRQDGGLFK (96 aa). Residues 19–43 show a composition bias toward basic and acidic residues; that stretch reads ISFKDEGEQEEKNSENSSAERDLAD. Lys-22 is covalently cross-linked (Glycyl lysine isopeptide (Lys-Gly) (interchain with G-Cter in SUMO2)). Positions 47 to 56 are enriched in polar residues; the sequence is SLVNESETNQ. Positions 63-91 are enriched in basic and acidic residues; the sequence is EAERRPPPRSESFRDKSRESLEEAAKRQD. Residues Thr-178 and Thr-189 each carry the phosphothreonine; by NLK modification. The segment at 178 to 372 is mediates interaction with MAD2L2; it reads TPLITYSNEH…RRWHALSREE (195 aa). The span at 295–305 shows a compositional bias: polar residues; sequence TVKQESSQSDV. 2 disordered regions span residues 295 to 327 and 397 to 418; these read TVKQ…KPHI and RDNY…TNEH. Residue Lys-297 forms a Glycyl lysine isopeptide (Lys-Gly) (interchain with G-Cter in SUMO) linkage. Positions 312-323 are enriched in basic and acidic residues; it reads KHQDSKKEEEKK. The segment at residues 327 to 395 is a DNA-binding region (HMG box); that stretch reads IKKPLNAFML…LHMQLYPGWS (69 aa). The Nuclear localization signal motif lies at 402-408; that stretch reads KKKKRKR.

Belongs to the TCF/LEF family. In terms of assembly, interacts with TGFB1I1. Interacts with SPIN1. Interacts with CTNNB1 (via the armadillo repeat); forms stable transcription complex. Interacts with EP300. Interacts with NLK. Interacts with CCDC85B (probably through the HMG box); prevents interaction with CTNNB1. Interacts with TNIK. Interacts with MAD2L2; prevents TCF7L2/TCF4 binding to promZIPK/DAPK3oters, negatively modulating its transcriptional activity. Interacts with ZIPK/DAPK3. Interacts with XIAP/BIRC4 and TLE3. Interacts with DDIT3/CHOP. The CTNNB1 and TCF7L2/TCF4 complex interacts with PML (isoform PML-4). Identified in a complex with CTNNB1 and FERMT2. Interacts with C11orf84/SPINDOC in a SPIN1-dependent manner. Interacts with DAZAP2; the interaction results in localization of DAZAP2 to the nucleus. In terms of processing, phosphorylated at Thr-178 and/or Thr-189 by NLK. Phosphorylation by NLK at these sites inhibits DNA-binding by TCF7L2/TCF4, thereby preventing transcriptional activation of target genes of the canonical Wnt/beta-catenin signaling pathway. Polysumoylated. Sumoylation is enhanced by PIAS family members and desumoylation is enhanced by SENP2. Sumoylation/desumoylation regulates TCF7L2/TCF4 transcription activity in the Wnt/beta-catenin signaling pathway without altering interaction with CTNNB1 nor binding to DNA. In terms of tissue distribution, detected in adult brain and liver, and at lower levels in intestine, with a clear increase from the distal colon to the duodenum. Detected at low levels in heart, lung, kidney, pituitary and testis.

It localises to the nucleus. The protein localises to the PML body. In terms of biological role, participates in the Wnt signaling pathway and modulates MYC expression by binding to its promoter in a sequence-specific manner. Acts as a repressor in the absence of CTNNB1, and as activator in its presence. Activates transcription from promoters with several copies of the Tcf motif CCTTTGATC in the presence of CTNNB1. TLE1, TLE2, TLE3 and TLE4 repress transactivation mediated by TCF7L2/TCF4 and CTNNB1. Expression of dominant-negative mutants results in cell-cycle arrest in G1. Necessary for the maintenance of the epithelial stem-cell compartment of the small intestine. The sequence is that of Transcription factor 7-like 2 (Tcf7l2) from Mus musculus (Mouse).